A 278-amino-acid chain; its full sequence is Probable endonuclease LCL3 (278 aa).

A helical transmembrane segment spans residues 15 to 37; sequence FSSDVVLLSLLISGSTLGAIAGY. One can recognise a TNase-like domain in the interval 58–263; sequence RWMYGKVTAV…KAKKRGLWRQ (206 aa). Arginine 154 is an active-site residue. Aspartate 159 is a binding site for Ca(2+). Residues glutamate 162 and arginine 202 contribute to the active site.

This sequence belongs to the LCL3 family.

The protein localises to the mitochondrion. It is found in the membrane. The polypeptide is Probable endonuclease LCL3 (LCL3) (Vanderwaltozyma polyspora (strain ATCC 22028 / DSM 70294 / BCRC 21397 / CBS 2163 / NBRC 10782 / NRRL Y-8283 / UCD 57-17) (Kluyveromyces polysporus)).